A 206-amino-acid polypeptide reads, in one-letter code: uncharacterized protein (206 aa).

This is an uncharacterized protein from Aquifex aeolicus (strain VF5).